The following is a 429-amino-acid chain: 3-phosphoshikimate 1-carboxyvinyltransferase (429 aa).

The 3-phosphoshikimate site is built by lysine 22, serine 23, and arginine 27. Lysine 22 lines the phosphoenolpyruvate pocket. Phosphoenolpyruvate-binding residues include glycine 94 and arginine 122. 3-phosphoshikimate-binding residues include serine 167, glutamine 169, aspartate 315, and lysine 342. Phosphoenolpyruvate is bound at residue glutamine 169. Aspartate 315 acts as the Proton acceptor in catalysis. Phosphoenolpyruvate is bound by residues arginine 346 and arginine 388.

The protein belongs to the EPSP synthase family. Monomer.

It localises to the cytoplasm. The enzyme catalyses 3-phosphoshikimate + phosphoenolpyruvate = 5-O-(1-carboxyvinyl)-3-phosphoshikimate + phosphate. The protein operates within metabolic intermediate biosynthesis; chorismate biosynthesis; chorismate from D-erythrose 4-phosphate and phosphoenolpyruvate: step 6/7. Its function is as follows. Catalyzes the transfer of the enolpyruvyl moiety of phosphoenolpyruvate (PEP) to the 5-hydroxyl of shikimate-3-phosphate (S3P) to produce enolpyruvyl shikimate-3-phosphate and inorganic phosphate. This Geobacter metallireducens (strain ATCC 53774 / DSM 7210 / GS-15) protein is 3-phosphoshikimate 1-carboxyvinyltransferase.